Reading from the N-terminus, the 258-residue chain is Deoxyribose-phosphate aldolase (258 aa).

The active-site Proton donor/acceptor is aspartate 101. Catalysis depends on lysine 166, which acts as the Schiff-base intermediate with acetaldehyde. The active-site Proton donor/acceptor is lysine 200.

It belongs to the DeoC/FbaB aldolase family. DeoC type 2 subfamily.

Its subcellular location is the cytoplasm. The enzyme catalyses 2-deoxy-D-ribose 5-phosphate = D-glyceraldehyde 3-phosphate + acetaldehyde. It functions in the pathway carbohydrate degradation; 2-deoxy-D-ribose 1-phosphate degradation; D-glyceraldehyde 3-phosphate and acetaldehyde from 2-deoxy-alpha-D-ribose 1-phosphate: step 2/2. Functionally, catalyzes a reversible aldol reaction between acetaldehyde and D-glyceraldehyde 3-phosphate to generate 2-deoxy-D-ribose 5-phosphate. The sequence is that of Deoxyribose-phosphate aldolase from Actinobacillus pleuropneumoniae serotype 7 (strain AP76).